We begin with the raw amino-acid sequence, 549 residues long: Glucose-6-phosphate isomerase (549 aa).

The active-site Proton donor is glutamate 355. Catalysis depends on residues histidine 386 and lysine 514.

The protein belongs to the GPI family.

Its subcellular location is the cytoplasm. The enzyme catalyses alpha-D-glucose 6-phosphate = beta-D-fructose 6-phosphate. The protein operates within carbohydrate biosynthesis; gluconeogenesis. It participates in carbohydrate degradation; glycolysis; D-glyceraldehyde 3-phosphate and glycerone phosphate from D-glucose: step 2/4. In terms of biological role, catalyzes the reversible isomerization of glucose-6-phosphate to fructose-6-phosphate. This chain is Glucose-6-phosphate isomerase, found in Salmonella paratyphi B (strain ATCC BAA-1250 / SPB7).